Consider the following 848-residue polypeptide: Translation initiation factor IF-2 (848 aa).

Positions 106–150 (TEQQTEAENSTNINLSEQTIKNNSHQSSSNTIETTQEKKQNDDLS) are disordered. The span at 112-139 (AENSTNINLSEQTIKNNSHQSSSNTIET) shows a compositional bias: polar residues. The tr-type G domain occupies 347-517 (PRAPIITVMG…LLLADMLELK (171 aa)). Residues 356–363 (GHVDHGKT) form a G1 region. Residue 356–363 (GHVDHGKT) participates in GTP binding. Residues 381-385 (GITQH) form a G2 region. A G3 region spans residues 403–406 (DTPG). GTP-binding positions include 403 to 407 (DTPGH) and 457 to 460 (NKID). The G4 stretch occupies residues 457–460 (NKID). The segment at 493–495 (SAL) is G5.

Belongs to the TRAFAC class translation factor GTPase superfamily. Classic translation factor GTPase family. IF-2 subfamily.

Its subcellular location is the cytoplasm. Its function is as follows. One of the essential components for the initiation of protein synthesis. Protects formylmethionyl-tRNA from spontaneous hydrolysis and promotes its binding to the 30S ribosomal subunits. Also involved in the hydrolysis of GTP during the formation of the 70S ribosomal complex. The protein is Translation initiation factor IF-2 of Orientia tsutsugamushi (strain Boryong) (Rickettsia tsutsugamushi).